A 206-amino-acid polypeptide reads, in one-letter code: MAKYLGPKLKLCRRENSDLFLKSGVRTIESKCNIDQAPGQHGSRKLRLSEYAKQLREKQKLRRLYGILEKQFHNYYKKASKLKGNTGQNLLFLLESRLDNIVYRLGFGTTRLEARQLINHKSICVNNKIVSFPSFQVSIDDKISVVKKSKNQLRIKASLEIMKQKEKPSWLSIDYPNMEGVFLRSIERDDLSSDINEHLIIELYSK.

The 61-residue stretch at 96–156 folds into the S4 RNA-binding domain; sequence SRLDNIVYRL…KKSKNQLRIK (61 aa).

This sequence belongs to the universal ribosomal protein uS4 family. In terms of assembly, part of the 30S ribosomal subunit. Contacts protein S5. The interaction surface between S4 and S5 is involved in control of translational fidelity.

Its function is as follows. One of the primary rRNA binding proteins, it binds directly to 16S rRNA where it nucleates assembly of the body of the 30S subunit. Functionally, with S5 and S12 plays an important role in translational accuracy. This is Small ribosomal subunit protein uS4 from Buchnera aphidicola subsp. Cinara cedri (strain Cc).